The chain runs to 379 residues: Probable RNA 3'-terminal phosphate cyclase-like protein (379 aa).

The protein belongs to the RNA 3'-terminal cyclase family. Type 2 subfamily. Part of the small subunit (SSU) processome, composed of more than 70 proteins and the RNA chaperone small nucleolar RNA (snoRNA) U3.

The protein localises to the nucleus. It localises to the nucleolus. Part of the small subunit (SSU) processome, first precursor of the small eukaryotic ribosomal subunit. During the assembly of the SSU processome in the nucleolus, many ribosome biogenesis factors, an RNA chaperone and ribosomal proteins associate with the nascent pre-rRNA and work in concert to generate RNA folding, modifications, rearrangements and cleavage as well as targeted degradation of pre-ribosomal RNA by the RNA exosome. Does not have cyclase activity. The chain is Probable RNA 3'-terminal phosphate cyclase-like protein from Caenorhabditis elegans.